Reading from the N-terminus, the 608-residue chain is Afamin (608 aa).

A signal peptide spans 1–21 (MRHLKLTGFIFFLLPLTESLA). Albumin domains are found at residues 22 to 210 (LPTK…APIT), 211 to 403 (QYLK…KFNE), and 404 to 599 (TTQR…KTGD). The N-linked (GlcNAc...) asparagine glycan is linked to Asn33. 11 cysteine pairs are disulfide-bonded: Cys77–Cys86, Cys99–Cys114, Cys113–Cys124, Cys148–Cys193, Cys192–Cys201, Cys224–Cys270, Cys269–Cys277, Cys289–Cys303, Cys302–Cys313, Cys340–Cys385, and Cys384–Cys393. Asn109 is a glycosylation site (N-linked (GlcNAc...) asparagine). The N-linked (GlcNAc...) asparagine glycan is linked to Asn153. The binding pocket for hydrophobic ligands stretch occupies residues 215–319 (ASSSYQRNVC…REACIINANK (105 aa)). Asn402 carries an N-linked (GlcNAc...) asparagine glycan. 5 disulfides stabilise this stretch: Cys416–Cys462, Cys461–Cys470, Cys483–Cys499, Cys498–Cys509, and Cys580–Cys589. Asn488 carries N-linked (GlcNAc...) asparagine glycosylation. The tract at residues 583-608 (VQEPESCFSPESSKTGDESQATEKQR) is disordered. The segment covering 596–608 (KTGDESQATEKQR) has biased composition (basic and acidic residues).

It belongs to the ALB/AFP/VDB family. Forms a 1:1 complex with Wnt family members; interacts with WNT1, WNT2B, WNT3, WNT5A, WNT7A, WNT7B, WNT8, WNT9A, WNT9B, WNT10A and WNT10B. Interacts with WNT3A. Post-translationally, N-glycosylated; more than 90% of the glycans are sialylated. Detected in brain, especially on brain capillaries (at protein level). Expressed in isolated brain capillaries.

Its subcellular location is the secreted. Its function is as follows. Functions as a carrier for hydrophobic molecules in body fluids. Essential for the solubility and activity of lipidated Wnt family members, including WNT1, WNT2B, WNT3, WNT3A, WNT5A, WNT7A, WNT7B, WNT8, WNT9A, WNT9B, WNT10A and WNT10B. Binds vitamin E. May transport vitamin E in body fluids under conditions where the lipoprotein system is not sufficient. May be involved in the transport of vitamin E across the blood-brain barrier. This chain is Afamin (Afm), found in Mus musculus (Mouse).